Consider the following 156-residue polypeptide: E3 ubiquitin-protein ligase LAP (156 aa).

The RING-CH-type zinc finger occupies 1 to 55 (MSDICWICNDVCDERNNFCGCNEEYKVVHIKCMQLWINYSKKKECNLCKTKYNIK). Over 1–73 (MSDICWICND…WNWCFNDKKT (73 aa)) the chain is Cytoplasmic. Zn(2+)-binding residues include Cys5, Cys8, Cys19, Cys21, His29, Cys32, Cys45, and Cys48. Residues 74-94 (TLFKIFFILFALVFIFLTITL) traverse the membrane as a helical segment. Topologically, residues 95-111 (SNDMANLVTGINDLICS) are lumenal. Residues 112–132 (IIFLIVYTVVMLTSICFSVFV) form a helical membrane-spanning segment. The Cytoplasmic segment spans residues 133-156 (VAIVVDFLLEAKEKNSFLTIREIV).

The protein belongs to the poxviridae LAP protein family.

Its subcellular location is the host membrane. It localises to the host Golgi apparatus. It is found in the host trans-Golgi network membrane. The protein resides in the host early endosome membrane. It carries out the reaction S-ubiquitinyl-[E2 ubiquitin-conjugating enzyme]-L-cysteine + [acceptor protein]-L-lysine = [E2 ubiquitin-conjugating enzyme]-L-cysteine + N(6)-ubiquitinyl-[acceptor protein]-L-lysine.. In terms of biological role, E3 ubiquitin-protein ligase which promotes ubiquitination and subsequent degradation of host MHC-I and CD4 molecules, presumably to prevent lysis of infected cells by cytotoxic T-lymphocytes and NK cell. Binds target molecules through transmembrane interaction. The result of this ubiquitination is the enhancement of the endocytosis of the target chain and the delivery to the lysosome, where it is proteolytically destroyed. The sequence is that of E3 ubiquitin-protein ligase LAP from Yaba-like disease virus (YLDV).